We begin with the raw amino-acid sequence, 151 residues long: S-protein homolog 1 (151 aa).

The signal sequence occupies residues 1–18 (MNCIKQFLLAICFSLALT).

This sequence belongs to the plant self-incompatibility (S1) protein family. Restricted to floral tissues.

The protein localises to the secreted. The protein is S-protein homolog 1 of Arabidopsis thaliana (Mouse-ear cress).